A 399-amino-acid chain; its full sequence is 1-deoxy-D-xylulose 5-phosphate reductoisomerase (399 aa).

NADPH is bound by residues Thr-10, Gly-11, Ser-12, Ile-13, and Asn-124. Lys-125 contributes to the 1-deoxy-D-xylulose 5-phosphate binding site. Residue Glu-126 coordinates NADPH. Asp-150 provides a ligand contact to Mn(2+). Positions 151, 152, 186, and 209 each coordinate 1-deoxy-D-xylulose 5-phosphate. Glu-152 provides a ligand contact to Mn(2+). Gly-215 lines the NADPH pocket. Residues Ser-222, Asn-227, Lys-228, and Glu-231 each coordinate 1-deoxy-D-xylulose 5-phosphate. A Mn(2+)-binding site is contributed by Glu-231.

Belongs to the DXR family. It depends on Mg(2+) as a cofactor. Requires Mn(2+) as cofactor.

It catalyses the reaction 2-C-methyl-D-erythritol 4-phosphate + NADP(+) = 1-deoxy-D-xylulose 5-phosphate + NADPH + H(+). It functions in the pathway isoprenoid biosynthesis; isopentenyl diphosphate biosynthesis via DXP pathway; isopentenyl diphosphate from 1-deoxy-D-xylulose 5-phosphate: step 1/6. In terms of biological role, catalyzes the NADPH-dependent rearrangement and reduction of 1-deoxy-D-xylulose-5-phosphate (DXP) to 2-C-methyl-D-erythritol 4-phosphate (MEP). The sequence is that of 1-deoxy-D-xylulose 5-phosphate reductoisomerase from Psychromonas ingrahamii (strain DSM 17664 / CCUG 51855 / 37).